The chain runs to 406 residues: Tyrosine--tRNA ligase (406 aa).

Tyr-34 contacts L-tyrosine. The 'HIGH' region signature appears at 39-48 (PTADSLHVGH). The L-tyrosine site is built by Tyr-167 and Gln-171. Residues 227–231 (KMGKT) carry the 'KMSKS' region motif. Lys-230 is a binding site for ATP. In terms of domain architecture, S4 RNA-binding spans 339–404 (RKIVDVLFEA…GKKEYHRLLV (66 aa)).

Belongs to the class-I aminoacyl-tRNA synthetase family. TyrS type 1 subfamily. As to quaternary structure, homodimer.

It localises to the cytoplasm. The catalysed reaction is tRNA(Tyr) + L-tyrosine + ATP = L-tyrosyl-tRNA(Tyr) + AMP + diphosphate + H(+). Catalyzes the attachment of tyrosine to tRNA(Tyr) in a two-step reaction: tyrosine is first activated by ATP to form Tyr-AMP and then transferred to the acceptor end of tRNA(Tyr). The sequence is that of Tyrosine--tRNA ligase from Caldanaerobacter subterraneus subsp. tengcongensis (strain DSM 15242 / JCM 11007 / NBRC 100824 / MB4) (Thermoanaerobacter tengcongensis).